A 153-amino-acid chain; its full sequence is Cytochrome c-type biogenesis protein CcmE (153 aa).

Residues 1–8 (MTPVQRRR) lie on the Cytoplasmic side of the membrane. A helical; Signal-anchor for type II membrane protein membrane pass occupies residues 9–29 (LVWVLLALLASGLATALVAMA). Over 30–153 (LERNIAYLYT…DVPVTAPEVR (124 aa)) the chain is Periplasmic. Heme-binding residues include H123 and Y127.

The protein belongs to the CcmE/CycJ family.

The protein resides in the cell inner membrane. In terms of biological role, heme chaperone required for the biogenesis of c-type cytochromes. Transiently binds heme delivered by CcmC and transfers the heme to apo-cytochromes in a process facilitated by CcmF and CcmH. In Stenotrophomonas maltophilia (strain R551-3), this protein is Cytochrome c-type biogenesis protein CcmE.